The primary structure comprises 150 residues: uncharacterized protein (150 aa).

Polar residues predominate over residues 81 to 90 (TTKPSCSFAQ). Residues 81-125 (TTKPSCSFAQPVTPRTREGAGVRGHRRRRRGSLSLIPWKTSNDKQ) are disordered.

This is an uncharacterized protein from Homo sapiens (Human).